The following is a 310-amino-acid chain: Glutamyl-Q tRNA(Asp) synthetase (310 aa).

L-glutamate contacts are provided by residues 8–12 (RFAPS) and Glu44. A 'HIGH' region motif is present at residues 11–21 (PSPTGPLHLGS). Positions 100, 102, 123, and 127 each coordinate Zn(2+). L-glutamate-binding residues include Tyr183 and Arg201. A 'KMSKS' region motif is present at residues 239–243 (KLSKQ). Lys242 is a binding site for ATP.

Belongs to the class-I aminoacyl-tRNA synthetase family. GluQ subfamily. Requires Zn(2+) as cofactor.

Its function is as follows. Catalyzes the tRNA-independent activation of glutamate in presence of ATP and the subsequent transfer of glutamate onto a tRNA(Asp). Glutamate is transferred on the 2-amino-5-(4,5-dihydroxy-2-cyclopenten-1-yl) moiety of the queuosine in the wobble position of the QUC anticodon. This chain is Glutamyl-Q tRNA(Asp) synthetase, found in Cupriavidus metallidurans (strain ATCC 43123 / DSM 2839 / NBRC 102507 / CH34) (Ralstonia metallidurans).